Consider the following 1663-residue polypeptide: Cortactin-binding protein 2 (1663 aa).

Disordered regions lie at residues 1-23 (MATD…AGAA), 203-222 (KKKT…RSTE), 358-440 (RQAS…LHPG), 454-479 (GNAN…PTSR), and 498-616 (RFTS…PKPS). The stretch at 119–276 (KKMQERMSAQ…EQLKRGSDSK (158 aa)) forms a coiled coil. A compositionally biased stretch (low complexity) spans 386-396 (PSTDSTPDPTS). The segment covering 411–422 (QTPGIAPQNSQA) has biased composition (polar residues). The residue at position 498 (R498) is an Asymmetric dimethylarginine. Over residues 583–597 (TVASPPSSLPQGNRV) the composition is skewed to polar residues. ANK repeat units lie at residues 709–739 (GRPT…DINY), 743–772 (DGHS…QINA), 776–805 (NGFT…NINH), 809–838 (GGQT…NRSV), 842–871 (DGWT…PACG), and 912–942 (EGWT…EPER). The disordered stretch occupies residues 1447 to 1477 (KKKGESGAWRKVNTSPRRKSGRFSLPTWNKP). The residue at position 1524 (S1524) is a Phosphoserine. 2 disordered regions span residues 1581–1602 (QKEV…KSKT) and 1618–1663 (SKVT…KHNK). Over residues 1582-1599 (KEVSPLSSHQTTECSNSK) the composition is skewed to polar residues. Low complexity predominate over residues 1624 to 1638 (SQNTKRSSSSSNTRQ). A compositionally biased stretch (basic and acidic residues) spans 1645–1663 (SKEENWNLHKNEHLDKHNK).

Interacts with CTTN/cortactin SH3 domain. Interacts with STRN, STRN4/zinedin and MOB4/phocein; this interactions mediate the association with the STRIPAK core complex and may regulate dendritic spine distribution of the STRIPAK complex in hippocampal neurons. Activation of glutamate receptors weakens the interaction with STRN and STRN4.

It is found in the cytoplasm. Its subcellular location is the cell cortex. It localises to the cell projection. The protein localises to the dendritic spine. In terms of biological role, regulates the dendritic spine distribution of CTTN/cortactin in hippocampal neurons, and thus controls dendritic spinogenesis and dendritic spine maintenance. Associates with the striatin-interacting phosphatase and kinase (STRIPAK) core complex to regulate dendritic spine distribution of the STRIPAK complex in hippocampal neurons. The sequence is that of Cortactin-binding protein 2 (CTTNBP2) from Papio anubis (Olive baboon).